The primary structure comprises 122 residues: UPF0102 protein MUL_2060 (122 aa).

This sequence belongs to the UPF0102 family.

The sequence is that of UPF0102 protein MUL_2060 from Mycobacterium ulcerans (strain Agy99).